The following is a 206-amino-acid chain: Small ribosomal subunit protein uS4c (206 aa).

2 stretches are compositionally biased toward basic residues: residues 1–13 (MSRYRGPKLRITR) and 25–34 (QSKKKGRPGQ). Residues 1–50 (MSRYRGPKLRITRRLGALPGLTQKQSKKKGRPGQHGKSNEADNSKKTTEY) are disordered. Residues 37 to 50 (KSNEADNSKKTTEY) are compositionally biased toward basic and acidic residues. The 63-residue stretch at 95–157 (MRLDTICFTL…ATSKNLVEGN (63 aa)) folds into the S4 RNA-binding domain.

The protein belongs to the universal ribosomal protein uS4 family. As to quaternary structure, part of the 30S ribosomal subunit. Contacts protein S5. The interaction surface between S4 and S5 is involved in control of translational fidelity.

Its subcellular location is the plastid. It is found in the chloroplast. In terms of biological role, one of the primary rRNA binding proteins, it binds directly to 16S rRNA where it nucleates assembly of the body of the 30S subunit. Functionally, with S5 and S12 plays an important role in translational accuracy. The protein is Small ribosomal subunit protein uS4c (rps4) of Trieres chinensis (Marine centric diatom).